Here is a 240-residue protein sequence, read N- to C-terminus: Uridylate kinase (240 aa).

13 to 16 (KASG) serves as a coordination point for ATP. Residues 21–26 (GSQGFG) are involved in allosteric activation by GTP. UMP is bound at residue G55. ATP-binding residues include G56 and R60. UMP-binding positions include D75 and 136–143 (TGNPFFTT). Positions 163, 164, 169, and 172 each coordinate ATP.

Belongs to the UMP kinase family. As to quaternary structure, homohexamer.

Its subcellular location is the cytoplasm. The enzyme catalyses UMP + ATP = UDP + ADP. It functions in the pathway pyrimidine metabolism; CTP biosynthesis via de novo pathway; UDP from UMP (UMPK route): step 1/1. With respect to regulation, allosterically activated by GTP. Inhibited by UTP. Its function is as follows. Catalyzes the reversible phosphorylation of UMP to UDP. This chain is Uridylate kinase, found in Brucella suis biovar 1 (strain 1330).